Consider the following 93-residue polypeptide: Acylphosphatase (93 aa).

An Acylphosphatase-like domain is found at Thr-5–Tyr-93. Catalysis depends on residues Arg-20 and Asn-38.

This sequence belongs to the acylphosphatase family.

It catalyses the reaction an acyl phosphate + H2O = a carboxylate + phosphate + H(+). This is Acylphosphatase (acyP) from Listeria monocytogenes serotype 4b (strain F2365).